Reading from the N-terminus, the 388-residue chain is Ferrochelatase (388 aa).

2 residues coordinate Fe cation: histidine 196 and glutamate 277.

The protein belongs to the ferrochelatase family.

The protein localises to the cytoplasm. It carries out the reaction heme b + 2 H(+) = protoporphyrin IX + Fe(2+). It functions in the pathway porphyrin-containing compound metabolism; protoheme biosynthesis; protoheme from protoporphyrin-IX: step 1/1. Catalyzes the ferrous insertion into protoporphyrin IX. The protein is Ferrochelatase of Nostoc sp. (strain PCC 7120 / SAG 25.82 / UTEX 2576).